Here is a 352-residue protein sequence, read N- to C-terminus: MEGLKDKTLQELEEMQNDPEAIARLALESPEVQDLQLEREMALATNRSLAEQNLEFQGPLEISRSNLSDKYQELRKLVERCQEQKAKLEKFSSALQPGTLLDLLQIEGMKIEEESEAMAEKFLEGEVPLETFLESFSSMRTLLHLRRVRVEKLQDVVRRPRALPELAGDVPPKRPPPPRPVPQATPPETEEQPPQPSVVTPYPLPYSPSPGLPVGPTAQGALQPAPFPVVAQPSSYGGPLGPYPSPHPGPRAMVGYSWSPQRSGPPQPGYPTAPTSTSGPGYPLVGGRTPGPGYPQQSPYLPSGNKPPYPTQPQLPGFPGQPQPPVPPQPPYPPGTTPSYGFHPPGPAWPRY.

A Phosphoserine modification is found at serine 29. The 90-residue stretch at 78–167 (VERCQEQKAK…RRPRALPELA (90 aa)) folds into the VPS37 C-terminal domain. The interval 162 to 352 (ALPELAGDVP…HPPGPAWPRY (191 aa)) is disordered. 3 stretches are compositionally biased toward pro residues: residues 173–185 (KRPP…PQAT), 202–213 (YPLPYSPSPGLP), and 319–336 (PGQP…PPGT).

The protein belongs to the VPS37 family. In terms of assembly, component of the ESCRT-I complex (endosomal sorting complex required for transport I) which consists of TSG101, VPS28, a VPS37 protein (VPS37A to -D) and MVB12A or MVB12B in a 1:1:1:1 stoichiometry. Interacts with TSG101, VPS28, MVB12A and MVB12B. Component of the ESCRT-I complex (endosomal sorting complex required for transport I) which consists of TSG101, VPS28, a VPS37 protein (VPS37A to -D) and UBAP1 in a 1:1:1:1 stoichiometry. Interacts with HGS and STAM2. Interacts with CEP55. Post-translationally, phosphorylated by TBK1.

Its subcellular location is the late endosome membrane. In terms of biological role, component of the ESCRT-I complex, a regulator of vesicular trafficking process. Required for the sorting of endocytic ubiquitinated cargos into multivesicular bodies. May be involved in cell growth and differentiation. This chain is Vacuolar protein sorting-associated protein 37C (Vps37c), found in Mus musculus (Mouse).